The following is a 252-amino-acid chain: Isoprenyl transferase (252 aa).

The active site involves D32. Residue D32 participates in Mg(2+) binding. Substrate-binding positions include 33–36 (GNGR), W37, R45, H49, and 77–79 (STE). N80 serves as the catalytic Proton acceptor. Residues W81, R83, R200, and 206-208 (RLS) contribute to the substrate site. E219 is a Mg(2+) binding site.

The protein belongs to the UPP synthase family. Homodimer. The cofactor is Mg(2+).

In terms of biological role, catalyzes the condensation of isopentenyl diphosphate (IPP) with allylic pyrophosphates generating different type of terpenoids. In Listeria monocytogenes serotype 4b (strain F2365), this protein is Isoprenyl transferase.